Consider the following 973-residue polypeptide: Leucine--tRNA ligase, chloroplastic/mitochondrial (973 aa).

Positions 126–135 (PSGAGLHVGH) match the 'HIGH' region motif. The short motif at 730-734 (KMSKS) is the 'KMSKS' region element. Lys-733 contributes to the ATP binding site.

Belongs to the class-I aminoacyl-tRNA synthetase family.

Its subcellular location is the plastid. The protein resides in the chloroplast. It localises to the mitochondrion. The catalysed reaction is tRNA(Leu) + L-leucine + ATP = L-leucyl-tRNA(Leu) + AMP + diphosphate. In terms of biological role, catalyzes the specific attachment of an amino acid to its cognate tRNA in a two step reaction: the amino acid (AA) is first activated by ATP to form AA-AMP and then transferred to the acceptor end of the tRNA. The protein is Leucine--tRNA ligase, chloroplastic/mitochondrial of Arabidopsis thaliana (Mouse-ear cress).